A 41-amino-acid chain; its full sequence is uncharacterized protein (41 aa).

It is found in the plastid. It localises to the chloroplast. This is an uncharacterized protein from Trieres chinensis (Marine centric diatom).